Here is a 176-residue protein sequence, read N- to C-terminus: Retinol-binding protein 4-B (176 aa).

Serine 1 carries the post-translational modification N-acetylserine. Cystine bridges form between cysteine 3–cysteine 159, cysteine 69–cysteine 173, and cysteine 119–cysteine 128. Residue glutamine 97 participates in substrate binding.

It belongs to the calycin superfamily. Lipocalin family.

The protein localises to the secreted. RBP delivers retinol from the liver stores to the peripheral tissues. In plasma, the RBP-retinol complex interacts with transthyretin, this prevents its loss by filtration through the kidney glomeruli. This is Retinol-binding protein 4-B (rbp4b) from Oncorhynchus mykiss (Rainbow trout).